The chain runs to 629 residues: tRNA uridine 5-carboxymethylaminomethyl modification enzyme MnmG (629 aa).

FAD is bound by residues 13–18 (GGGHAG), valine 125, and serine 180. 273–287 (GPRYCPSIEDKIHRF) contacts NAD(+). Residue glutamine 370 participates in FAD binding.

This sequence belongs to the MnmG family. As to quaternary structure, homodimer. Heterotetramer of two MnmE and two MnmG subunits. FAD serves as cofactor.

The protein resides in the cytoplasm. NAD-binding protein involved in the addition of a carboxymethylaminomethyl (cmnm) group at the wobble position (U34) of certain tRNAs, forming tRNA-cmnm(5)s(2)U34. In Shewanella oneidensis (strain ATCC 700550 / JCM 31522 / CIP 106686 / LMG 19005 / NCIMB 14063 / MR-1), this protein is tRNA uridine 5-carboxymethylaminomethyl modification enzyme MnmG.